A 190-amino-acid chain; its full sequence is MKTGKELKPGTVIRLENDPWLVQKAEFTKSGRNSAIMKTKLKNLLTGYKTEIVYSADDKLDDVILDRKEATLSFISGDTYTFMDTTDYTMYELNAEDIEAVLPFIEEGMEDVCEAIFFEERLVSVELPTTIVRKVAYTEGSARGDTSGKVMKPAKLSNGTELQVADFIEIDDLIEIDTREGGSYKGRAKK.

Belongs to the elongation factor P family.

The protein resides in the cytoplasm. It functions in the pathway protein biosynthesis; polypeptide chain elongation. Involved in peptide bond synthesis. Stimulates efficient translation and peptide-bond synthesis on native or reconstituted 70S ribosomes in vitro. Probably functions indirectly by altering the affinity of the ribosome for aminoacyl-tRNA, thus increasing their reactivity as acceptors for peptidyl transferase. The protein is Elongation factor P of Pseudomonas fluorescens (strain SBW25).